Reading from the N-terminus, the 441-residue chain is Enolase (441 aa).

Gln163 is a (2R)-2-phosphoglycerate binding site. Catalysis depends on Glu205, which acts as the Proton donor. Mg(2+) is bound by residues Asp242, Glu288, and Asp315. 4 residues coordinate (2R)-2-phosphoglycerate: Lys340, Arg369, Ser370, and Lys391. Lys340 (proton acceptor) is an active-site residue.

Belongs to the enolase family. The cofactor is Mg(2+).

Its subcellular location is the cytoplasm. It is found in the secreted. The protein localises to the cell surface. It carries out the reaction (2R)-2-phosphoglycerate = phosphoenolpyruvate + H2O. It functions in the pathway carbohydrate degradation; glycolysis; pyruvate from D-glyceraldehyde 3-phosphate: step 4/5. Functionally, catalyzes the reversible conversion of 2-phosphoglycerate (2-PG) into phosphoenolpyruvate (PEP). It is essential for the degradation of carbohydrates via glycolysis. This chain is Enolase, found in Ligilactobacillus salivarius (strain UCC118) (Lactobacillus salivarius).